A 673-amino-acid polypeptide reads, in one-letter code: Vasorin (673 aa).

The N-terminal stretch at 1-24 is a signal peptide; the sequence is MHSRSCLPPLLLLLLVLLGSGVQG. The LRRNT domain occupies 25–53; it reads CPSGCQCNQPQTVFCTARQGTTVPRDVPP. Residues 25–576 are Extracellular-facing; the sequence is CPSGCQCNQP…VTQAREGNLP (552 aa). LRR repeat units follow at residues 54-75, 78-99, 102-123, 126-147, 150-170, 171-192, 194-215, 218-239, 241-265, and 266-288; these read DTVGLYIFENGITTLDVGCFAG, GLQLLDLSQNQITSLPGGIFQP, NLSNLDLTANKLHEISNETFRG, RLERLYLGKNRIRHIQPGAFDA, RLLELKLPDNELRVLPPLHLP, RLLLLDLSHNSIPALEAGILDT, NVEALRLAGLGLRQLDEGLFGR, NLHDLDVSDNQLEHMPSVIQGL, GLTRLRLAGNTRIAQIRPEDLAGLT, and ALQELDVSNLSLQALPSDLSSLF. Residues Asn102 and Asn118 are each glycosylated (N-linked (GlcNAc...) asparagine). Asn274 carries N-linked (GlcNAc...) asparagine glycosylation. The 54-residue stretch at 299–352 folds into the LRRCT domain; that stretch reads NPFNCLCPLSWFGPWVRENHVVLASPEETRCHFPPKNAGRLLLDLDYADFGCPV. The interval 369–389 is disordered; sequence PTLSTSSQAPTWPSLTEPTTQ. Residues 370 to 389 are compositionally biased toward polar residues; the sequence is TLSTSSQAPTWPSLTEPTTQ. Positions 406–443 constitute an EGF-like domain; sequence QPQDCPASICLNGGSCRLGARHHWECLCPEGFIGLYCE. 3 disulfide bridges follow: Cys410–Cys421, Cys415–Cys431, and Cys433–Cys442. In terms of domain architecture, Fibronectin type-III spans 463-559; it reads PLLPLSIEPV…ACGEANTSQA (97 aa). N-linked (GlcNAc...) asparagine glycosylation is found at Asn501, Asn529, and Asn555. The chain crosses the membrane as a helical span at residues 577–597; it reads LLIAPALAAVLLAVLAAAGAA. Residues 598–673 lie on the Cytoplasmic side of the membrane; the sequence is YCVRRARATS…QGVLPAKHYI (76 aa). The segment at 608–648 is disordered; it reads TAQDKGQVGPGTGPLELEGVKAPLEPGSKATEGGGEALSGG.

In terms of assembly, interacts with TGFB1, TGFB2 and TGFB3. N-glycosylated.

It is found in the membrane. In terms of biological role, may act as an inhibitor of TGF-beta signaling. In Mus musculus (Mouse), this protein is Vasorin (Vasn).